We begin with the raw amino-acid sequence, 117 residues long: G antigen 13 (117 aa).

Residues 1–117 (MSWRGRSTYY…PEEGEKQSQC (117 aa)) form a disordered region. Composition is skewed to acidic residues over residues 32 to 45 (FSDE…EEGE) and 87 to 96 (ECEDGPDGQE). Basic and acidic residues predominate over residues 103–117 (EEVKTPEEGEKQSQC).

Belongs to the GAGE family.

The sequence is that of G antigen 13 from Homo sapiens (Human).